The following is a 355-amino-acid chain: Phenylalanine--tRNA ligase alpha subunit (355 aa).

Position 273 (Glu273) interacts with Mg(2+).

It belongs to the class-II aminoacyl-tRNA synthetase family. Phe-tRNA synthetase alpha subunit type 1 subfamily. In terms of assembly, tetramer of two alpha and two beta subunits. The cofactor is Mg(2+).

Its subcellular location is the cytoplasm. The catalysed reaction is tRNA(Phe) + L-phenylalanine + ATP = L-phenylalanyl-tRNA(Phe) + AMP + diphosphate + H(+). The protein is Phenylalanine--tRNA ligase alpha subunit of Bifidobacterium adolescentis (strain ATCC 15703 / DSM 20083 / NCTC 11814 / E194a).